A 195-amino-acid chain; its full sequence is MLSLAYHTLEQVSDKVLLRKSSYNLTDDDLQAVVNCTTTILEQRAVIDQIAYLGQKYYWVSVDGYNNNNYTISDEMENLLRQCINNYDDRANVALVTHNVYAVSGSHSELQLQEHYDYFGYGLPEDYDGQSSEYYDTDLDVVTDSSIQLSRRSGNKPDTINDNSWSRYGVALAFYLFTNGVQYVATKHTPWCGKC.

This is an uncharacterized protein from Schizosaccharomyces pombe (strain 972 / ATCC 24843) (Fission yeast).